The sequence spans 218 residues: Probable 1-Cys peroxiredoxin (218 aa).

One can recognise a Thioredoxin domain in the interval W5–L166. C47 (cysteine sulfenic acid (-SOH) intermediate) is an active-site residue.

Belongs to the peroxiredoxin family. Prx6 subfamily.

It is found in the nucleus. It localises to the cytoplasm. It catalyses the reaction a hydroperoxide + [thioredoxin]-dithiol = an alcohol + [thioredoxin]-disulfide + H2O. Its function is as follows. Thiol-specific peroxidase that catalyzes the reduction of hydrogen peroxide and organic hydroperoxides to water and alcohols, respectively. Seems to contribute to the inhibition of germination during stress. Associated with the rehydration events involved in the recovery of the desiccation-tolerant moss. The sequence is that of Probable 1-Cys peroxiredoxin from Syntrichia ruralis (Great hairy screw-moss).